The primary structure comprises 187 residues: GTP cyclohydrolase 1 (187 aa).

Residues C81, H84, and C152 each coordinate Zn(2+).

Belongs to the GTP cyclohydrolase I family. Toroid-shaped homodecamer, composed of two pentamers of five dimers.

It catalyses the reaction GTP + H2O = 7,8-dihydroneopterin 3'-triphosphate + formate + H(+). The protein operates within cofactor biosynthesis; 7,8-dihydroneopterin triphosphate biosynthesis; 7,8-dihydroneopterin triphosphate from GTP: step 1/1. The protein is GTP cyclohydrolase 1 of Pyrobaculum aerophilum (strain ATCC 51768 / DSM 7523 / JCM 9630 / CIP 104966 / NBRC 100827 / IM2).